The chain runs to 393 residues: NAD(P)H-quinone oxidoreductase subunit H, chloroplastic (393 aa).

This sequence belongs to the complex I 49 kDa subunit family. NDH is composed of at least 16 different subunits, 5 of which are encoded in the nucleus.

It localises to the plastid. The protein localises to the chloroplast thylakoid membrane. It catalyses the reaction a plastoquinone + NADH + (n+1) H(+)(in) = a plastoquinol + NAD(+) + n H(+)(out). It carries out the reaction a plastoquinone + NADPH + (n+1) H(+)(in) = a plastoquinol + NADP(+) + n H(+)(out). Functionally, NDH shuttles electrons from NAD(P)H:plastoquinone, via FMN and iron-sulfur (Fe-S) centers, to quinones in the photosynthetic chain and possibly in a chloroplast respiratory chain. The immediate electron acceptor for the enzyme in this species is believed to be plastoquinone. Couples the redox reaction to proton translocation, and thus conserves the redox energy in a proton gradient. The chain is NAD(P)H-quinone oxidoreductase subunit H, chloroplastic from Lobularia maritima (Sweet alyssum).